We begin with the raw amino-acid sequence, 895 residues long: MLSHEITQRWLSYFEARDHHVVPSASLVSQQPGAMFTIAGMVPFIPYFLGQETPPYQRATSVQKCIRTLDIDEVGKTARHGTFFQMAGNFSFGDYFKSQAIPMAWELLTTAPEQGGFGLDPERLWVTVYEGDQESYDLWHDTVGLPAQRIQRMGRDENYWDTGQPGPAGPDSEIFYDRGPRYGKDGGPAVDDDRYIEIWNLVFMQYQRGEGNGKDYEILGELPRKNIDTGLGVERLAMLLQGVENFYETDQVRPVLDAAAKLSGRTYHGAEKAGEQGYDDDVRMRVVADHVRSSLMLIADGVTPGNEGRGYILRRLLRRAVRAMRLLGVTEPCLPVLLPESRDAMKGVYPVVAEDFERISRIAYAEERAFLKTIESGTTRLEHAVEVAKGEQRALSGADAFALHDTFGFPIDLTLEMAEEAGVSVDETAFRALMAEQRQRAQEDARAKKGALADLSELRRMLDDHGSEFTGYTELVTPTTVRAILSGGVSVPAASEGEHVEVVLERTPFYAEAGGQAADVGTIDSSDGAQLTVEDVQQPVKGLSVHKVTVSAGQVLVGDEVTARVDSRRRHDGEAAHSGTHVIHAALHDVLGPDAVQRGSFNKEGYLRFDFSHGEALNAGQIQEIEQIANTAIRDDFEVVTREMPLAEAKKLGAMSLFGEKYGDEVRVVEMNGPWSRELCGGTHVGSTSQLGSLSLVSEQSVGSGNRRVEALVGLNSFNHLAAERTLVNQLTGMLKVQSSAELPERLAATLDKLKETERQLAGLRQQQLQAQAGQLARDAERVGPVTAVLHDAGEIASADALRSLALDLRTRLGSEPAVAAVTGVANDRPLVVVAVNDAARDAGLAAGQLVRTAATTLGGGGGGKPDVAQGGGSDAAKIPDALAAIRRQIQSTAG.

Residues histidine 577, histidine 581, cysteine 680, and histidine 684 each contribute to the Zn(2+) site.

Belongs to the class-II aminoacyl-tRNA synthetase family. Zn(2+) serves as cofactor.

The protein resides in the cytoplasm. The enzyme catalyses tRNA(Ala) + L-alanine + ATP = L-alanyl-tRNA(Ala) + AMP + diphosphate. Catalyzes the attachment of alanine to tRNA(Ala) in a two-step reaction: alanine is first activated by ATP to form Ala-AMP and then transferred to the acceptor end of tRNA(Ala). Also edits incorrectly charged Ser-tRNA(Ala) and Gly-tRNA(Ala) via its editing domain. This Kocuria rhizophila (strain ATCC 9341 / DSM 348 / NBRC 103217 / DC2201) protein is Alanine--tRNA ligase.